The primary structure comprises 438 residues: MANNVVVLGTQWGDEGKGKIVDLLTEDAKYVVRYQGGHNAGHTLVIDGVKTVLHLIPSGILRDNVKCVIGNGVVLSPEALIKEMKPLEERGIPVRERLFISEACPLILPYHVAMDQAREIARGKKAIGTTGRGIGPAYEDKVARRGLRVGDLFDMEAFAEKLKEVMEFHNFQLVNFYKAEAVSYEEVLEQAKGYAELLTSMVIDVTDELDAARKRGDKIMFEGAQGTLLDIDHGTYPYVTSSNTTAGGVAAGSGFGPRYLGYILGIAKAYCTRVGAGPFPTELYDGQEKQDPVGKHLGTVGHEFGATTGRLRRTGWFDAVAMRRAIQINSVSGFCLTKLDVLDGLKELKICTGYQMEDGSVLEVSPMAAEAFEKVTPIYETMPGWSENTFGAKSLEDLPQAAINYIKRIEELTGVPVDIISTGPDRNETIVKVHPFES.

GTP contacts are provided by residues 13–19 (GDEGKGK) and 41–43 (GHT). The Proton acceptor role is filled by D14. 2 residues coordinate Mg(2+): D14 and G41. IMP contacts are provided by residues 14 to 17 (DEGK), 39 to 42 (NAGH), T130, R144, Q225, T240, and R310. Catalysis depends on H42, which acts as the Proton donor. 306–312 (ATTGRLR) is a substrate binding site. GTP is bound by residues R312, 338-340 (KLD), and 421-423 (STG).

It belongs to the adenylosuccinate synthetase family. As to quaternary structure, homodimer. Requires Mg(2+) as cofactor.

The protein localises to the cytoplasm. The catalysed reaction is IMP + L-aspartate + GTP = N(6)-(1,2-dicarboxyethyl)-AMP + GDP + phosphate + 2 H(+). Its pathway is purine metabolism; AMP biosynthesis via de novo pathway; AMP from IMP: step 1/2. Functionally, plays an important role in the de novo pathway of purine nucleotide biosynthesis. Catalyzes the first committed step in the biosynthesis of AMP from IMP. The polypeptide is Adenylosuccinate synthetase (Vibrio vulnificus (strain YJ016)).